The following is a 2101-amino-acid chain: General transcription factor 3C polypeptide 1 (2101 aa).

The segment covering 473–487 (GEEAFLSDSESEEES) has biased composition (acidic residues). 2 disordered regions span residues 473–574 (GEEA…MDSH) and 588–609 (NPKEGGGSQKGGRHGSSQDKPH). Over residues 492–503 (GKRRGRGSRGHA) the composition is skewed to basic residues. Positions 504 to 513 (RASGDAGSGS) are enriched in low complexity. A Glycyl lysine isopeptide (Lys-Gly) (interchain with G-Cter in SUMO2) cross-link involves residue Lys-534. Ser-667 carries the post-translational modification Phosphoserine. 2 disordered regions span residues 718-772 (STAN…EKMG) and 820-864 (GEQP…SSWE). Residues 747 to 759 (RSANSDPNTSSKP) show a composition bias toward polar residues. Basic and acidic residues-rich tracts occupy residues 760-771 (ESTRVKKTDEKM) and 826-836 (HSERKTGKQES). Glycyl lysine isopeptide (Lys-Gly) (interchain with G-Cter in SUMO2) cross-links involve residues Lys-770 and Lys-833. Ser-1063 carries the phosphoserine modification. The span at 1186–1196 (EEQFELDREPT) shows a compositional bias: basic and acidic residues. Disordered stretches follow at residues 1186-1239 (EEQF…KKLR), 1598-1627 (KSLGKDGGLDDDEEEEDLDEGSGTKRQGVE), and 1822-1923 (DTKA…QENQ). Phosphothreonine is present on Thr-1196. Residues 1199–1215 (RNRKVRGGKSQKRKRLK) show a composition bias toward basic residues. Over residues 1229-1239 (EHPEAKSKKLR) the composition is skewed to basic and acidic residues. A compositionally biased stretch (acidic residues) spans 1606 to 1617 (LDDDEEEEDLDE). Positions 1822–1831 (DTKASGDDSQ) are enriched in basic and acidic residues. 2 positions are modified to phosphoserine: Ser-1854 and Ser-1890. Residues 1900 to 1910 (EAQAPAQLAAP) show a composition bias toward low complexity.

It belongs to the TFIIIC subunit 1 family. As to quaternary structure, part of the TFIIIC subcomplex TFIIIC2, consisting of six subunits, GTF3C1, GTF3C2, GTF3C3, GTF3C4, GTF3C5 and GTF3C6. Interacts with IGHMBP2. Interacts with MAF1.

The protein localises to the nucleus. Its function is as follows. Required for RNA polymerase III-mediated transcription. Component of TFIIIC that initiates transcription complex assembly on tRNA and is required for transcription of 5S rRNA and other stable nuclear and cytoplasmic RNAs. Binds to the box B promoter element. This Mus musculus (Mouse) protein is General transcription factor 3C polypeptide 1 (Gtf3c1).